The following is a 1432-amino-acid chain: DNA-directed RNA polymerase subunit beta (1432 aa).

It belongs to the RNA polymerase beta chain family. The RNAP catalytic core consists of 2 alpha, 1 beta, 1 beta' and 1 omega subunit. When a sigma factor is associated with the core the holoenzyme is formed, which can initiate transcription.

The catalysed reaction is RNA(n) + a ribonucleoside 5'-triphosphate = RNA(n+1) + diphosphate. Its function is as follows. DNA-dependent RNA polymerase catalyzes the transcription of DNA into RNA using the four ribonucleoside triphosphates as substrates. The sequence is that of DNA-directed RNA polymerase subunit beta from Solibacter usitatus (strain Ellin6076).